We begin with the raw amino-acid sequence, 131 residues long: Holo-[acyl-carrier-protein] synthase (131 aa).

The Mg(2+) site is built by D8 and E59.

Belongs to the P-Pant transferase superfamily. AcpS family. Mg(2+) serves as cofactor.

The protein resides in the cytoplasm. The enzyme catalyses apo-[ACP] + CoA = holo-[ACP] + adenosine 3',5'-bisphosphate + H(+). Its function is as follows. Transfers the 4'-phosphopantetheine moiety from coenzyme A to a Ser of acyl-carrier-protein. The chain is Holo-[acyl-carrier-protein] synthase from Rickettsia rickettsii (strain Sheila Smith).